The sequence spans 256 residues: Trans-aconitate 2-methyltransferase (256 aa).

Belongs to the methyltransferase superfamily. Tam family.

It localises to the cytoplasm. The catalysed reaction is trans-aconitate + S-adenosyl-L-methionine = (E)-3-(methoxycarbonyl)pent-2-enedioate + S-adenosyl-L-homocysteine. Functionally, catalyzes the S-adenosylmethionine monomethyl esterification of trans-aconitate. This is Trans-aconitate 2-methyltransferase from Rhodopseudomonas palustris (strain BisB18).